A 1067-amino-acid polypeptide reads, in one-letter code: Probable importin subunit beta-4 (1067 aa).

Residues 27 to 94 (ATRALETKYL…RSNLLDITLK (68 aa)) form the Importin N-terminal domain. 6 HEAT repeats span residues 159–196 (KLLL…VLES), 379–416 (GNLP…EIPT), 420–457 (KHHA…GLDK), 591–633 (PFLE…SVET), 890–927 (PFTR…FSTE), and 1013–1050 (QHLG…EIAP).

The protein belongs to the importin beta family.

It is found in the cytoplasm. Its subcellular location is the nucleus. The protein localises to the nucleus envelope. Its function is as follows. Required for nuclear protein import, its predominant substrate seems to be ribosomal proteins. Binds to nucleoporins and the GTP-bound form of gsp1 (Ran). This chain is Probable importin subunit beta-4 (kap123), found in Schizosaccharomyces pombe (strain 972 / ATCC 24843) (Fission yeast).